Consider the following 156-residue polypeptide: MIIKNLQEFYRLLIPNEPLIAIDYGSKKIGVALSDQALAIAMPLNTITELNQRVIITSLLNIIEKYQVCGIVIGLPIDMSGGVTKQTNIVMKFADKLKQSVSLPIYLQDERLTTKSANNFLKSFGIKRKDRNNNDDAVAASMILEIVLNAIKRFNL.

It belongs to the YqgF nuclease family.

It localises to the cytoplasm. Could be a nuclease involved in processing of the 5'-end of pre-16S rRNA. The protein is Putative pre-16S rRNA nuclease of Rickettsia typhi (strain ATCC VR-144 / Wilmington).